We begin with the raw amino-acid sequence, 337 residues long: Eukaryotic translation initiation factor 3 subunit H (337 aa).

One can recognise an MPN domain in the interval 21–153 (VQCDGLAVMK…LKAYRLTPQA (133 aa)).

This sequence belongs to the eIF-3 subunit H family. In terms of assembly, component of the eukaryotic translation initiation factor 3 (eIF-3) complex.

Its subcellular location is the cytoplasm. In terms of biological role, component of the eukaryotic translation initiation factor 3 (eIF-3) complex, which is involved in protein synthesis of a specialized repertoire of mRNAs and, together with other initiation factors, stimulates binding of mRNA and methionyl-tRNAi to the 40S ribosome. The eIF-3 complex specifically targets and initiates translation of a subset of mRNAs involved in cell proliferation. The chain is Eukaryotic translation initiation factor 3 subunit H from Bombyx mori (Silk moth).